Reading from the N-terminus, the 1860-residue chain is Probable helicase with zinc finger domain (1860 aa).

The C3H1-type zinc-finger motif lies at 168–196 (SEEYTLCKRFLEQGLCRYGAQCTSAHSQE). ATP is bound at residue 661-668 (GPYGTGKT). The DEAA box motif lies at 787–790 (DEAA). Disordered regions lie at residues 1106 to 1136 (RSQHPPQQGPGKHQHSPPKAKGQLANHTEPF), 1158 to 1177 (TPPGAGAPASGKSPSPVQRL), 1286 to 1317 (ERKAPELKEKQGDLESVQNKSPEPQSNMGFPA), 1556 to 1604 (IQPR…PPDH), 1641 to 1709 (RQDP…RYPS), and 1749 to 1860 (MSEE…TYFK). Residues 1107-1116 (SQHPPQQGPG) are compositionally biased toward low complexity. Residues 1286 to 1298 (ERKAPELKEKQGD) are compositionally biased toward basic and acidic residues. Residues 1301–1313 (SVQNKSPEPQSNM) show a composition bias toward polar residues. Low complexity predominate over residues 1641 to 1660 (RQDPGPLQHQQQKQQLQAPQ). Composition is skewed to pro residues over residues 1760–1769 (QPPPPPPPHP) and 1783–1794 (PLLPSKQTPPDP). The segment covering 1847-1860 (GSSNSSNGYYTYFK) has biased composition (low complexity).

Belongs to the DNA2/NAM7 helicase family.

The protein resides in the nucleus. Its function is as follows. May act as a helicase. The polypeptide is Probable helicase with zinc finger domain (helz) (Danio rerio (Zebrafish)).